Here is a 317-residue protein sequence, read N- to C-terminus: Acetyl-coenzyme A carboxylase carboxyl transferase subunit alpha (317 aa).

The 256-residue stretch at 37–292 folds into the CoA carboxyltransferase C-terminal domain; the sequence is EINKKLEQTK…ADYITKGYNE (256 aa).

The protein belongs to the AccA family. As to quaternary structure, acetyl-CoA carboxylase is a heterohexamer composed of biotin carboxyl carrier protein (AccB), biotin carboxylase (AccC) and two subunits each of ACCase subunit alpha (AccA) and ACCase subunit beta (AccD).

Its subcellular location is the cytoplasm. It catalyses the reaction N(6)-carboxybiotinyl-L-lysyl-[protein] + acetyl-CoA = N(6)-biotinyl-L-lysyl-[protein] + malonyl-CoA. It participates in lipid metabolism; malonyl-CoA biosynthesis; malonyl-CoA from acetyl-CoA: step 1/1. Component of the acetyl coenzyme A carboxylase (ACC) complex. First, biotin carboxylase catalyzes the carboxylation of biotin on its carrier protein (BCCP) and then the CO(2) group is transferred by the carboxyltransferase to acetyl-CoA to form malonyl-CoA. The protein is Acetyl-coenzyme A carboxylase carboxyl transferase subunit alpha of Flavobacterium johnsoniae (strain ATCC 17061 / DSM 2064 / JCM 8514 / BCRC 14874 / CCUG 350202 / NBRC 14942 / NCIMB 11054 / UW101) (Cytophaga johnsonae).